The primary structure comprises 214 residues: Adenylate kinase (214 aa).

Position 10-15 (10-15 (GAGKGT)) interacts with ATP. Residues 30-59 (STGDMLRAAVKAGTPLGLEAKKVMDAGQLV) form an NMP region. Residues Thr31, Arg36, 57 to 59 (QLV), 85 to 88 (GFPR), and Gln92 each bind AMP. Positions 122-159 (GRRVHPGSGRVYHVVFNPPKVEGKDDVTGEDLAIRPDD) are LID. ATP contacts are provided by residues Arg123 and 132 to 133 (VY). Arg156 and Arg167 together coordinate AMP. Residue Gln200 participates in ATP binding.

Belongs to the adenylate kinase family. In terms of assembly, monomer.

The protein resides in the cytoplasm. The catalysed reaction is AMP + ATP = 2 ADP. Its pathway is purine metabolism; AMP biosynthesis via salvage pathway; AMP from ADP: step 1/1. In terms of biological role, catalyzes the reversible transfer of the terminal phosphate group between ATP and AMP. Plays an important role in cellular energy homeostasis and in adenine nucleotide metabolism. This Shewanella putrefaciens (strain CN-32 / ATCC BAA-453) protein is Adenylate kinase.